The following is an 87-amino-acid chain: Small ribosomal subunit protein uS17 (87 aa).

This sequence belongs to the universal ribosomal protein uS17 family. Part of the 30S ribosomal subunit.

Its function is as follows. One of the primary rRNA binding proteins, it binds specifically to the 5'-end of 16S ribosomal RNA. This Bacillus cytotoxicus (strain DSM 22905 / CIP 110041 / 391-98 / NVH 391-98) protein is Small ribosomal subunit protein uS17.